Reading from the N-terminus, the 740-residue chain is Elongation factor 2 (740 aa).

The tr-type G domain maps to 23-264 (AQIRNAGTLA…MIIEHVPPPN (242 aa)). Residues 32–39 (AHVDHGKT), 98–102 (DTPGH), and 152–155 (NKID) each bind GTP. Histidine 605 is modified (diphthamide).

Belongs to the TRAFAC class translation factor GTPase superfamily. Classic translation factor GTPase family. EF-G/EF-2 subfamily.

Its subcellular location is the cytoplasm. Its function is as follows. Catalyzes the GTP-dependent ribosomal translocation step during translation elongation. During this step, the ribosome changes from the pre-translocational (PRE) to the post-translocational (POST) state as the newly formed A-site-bound peptidyl-tRNA and P-site-bound deacylated tRNA move to the P and E sites, respectively. Catalyzes the coordinated movement of the two tRNA molecules, the mRNA and conformational changes in the ribosome. The sequence is that of Elongation factor 2 from Pyrobaculum arsenaticum (strain DSM 13514 / JCM 11321 / PZ6).